The primary structure comprises 156 residues: Ribosomal RNA large subunit methyltransferase H (156 aa).

Residues leucine 73, glycine 104, and 123-128 (LSSLTL) contribute to the S-adenosyl-L-methionine site.

It belongs to the RNA methyltransferase RlmH family. In terms of assembly, homodimer.

It localises to the cytoplasm. The enzyme catalyses pseudouridine(1915) in 23S rRNA + S-adenosyl-L-methionine = N(3)-methylpseudouridine(1915) in 23S rRNA + S-adenosyl-L-homocysteine + H(+). Functionally, specifically methylates the pseudouridine at position 1915 (m3Psi1915) in 23S rRNA. The chain is Ribosomal RNA large subunit methyltransferase H from Neisseria meningitidis serogroup C / serotype 2a (strain ATCC 700532 / DSM 15464 / FAM18).